The chain runs to 295 residues: G1/S-specific cyclin-D1 (295 aa).

One can recognise a Cyclin N-terminal domain in the interval L28–L152. The interval A262–I295 is disordered. K269 participates in a covalent cross-link: Glycyl lysine isopeptide (Lys-Gly) (interchain with G-Cter in ubiquitin). Acidic residues predominate over residues E272–D282. Position 286 is a phosphothreonine (T286).

This sequence belongs to the cyclin family. Cyclin D subfamily. As to quaternary structure, interacts with either CDK4 or CDK6 protein kinase to form a serine/threonine kinase holoenzyme complex. The cyclin subunit imparts substrate specificity to the complex. Component of the ternary complex CCND1/CDK4/CDKN1B required for nuclear translocation and modulation of CDK4-mediated kinase activity. Interacts directly with CDKN1B. Can form similar complexes with either CDKN1A or CDKN2A. Interacts with UHRF2; the interaction ubiquitinates CCND1 and appears to occur independently of phosphorylation. Interacts with USP2. Interacts (via cyclin N-terminal domain) with INSM1 (via N-terminal region); the interaction competes with the binding of CCND1 to CDK4 during cell cycle progression and inhibits CDK4 activity. Interacts with CDK4; the interaction is prevented with the binding of CCND1 to INSM1 during cell cycle progression. Phosphorylation at Thr-286 by MAP kinases is required for ubiquitination and degradation by the DCX(AMBRA1) complex. It also plays an essential role for recognition by the FBXO31 component of SCF (SKP1-cullin-F-box) protein ligase complex following DNA damage. Post-translationally, ubiquitinated at Lys-269 by the DCX(AMBRA1) complex during the transition from G1 to S cell phase, leading to its degradation: ubiquitination is dependent on Thr-286 phosphorylation. The DCX(AMBRA1) complex represents the major regulator of CCND1 stability during the G1/S transition. Also ubiquitinated by the SCF(FBXO4) and Cul7-RING(FBXW8) ubiquitin-protein ligase complexes. Following DNA damage it is ubiquitinated by the SCF(FBXO31) protein ligase complex. SCF(FBXO31) ubiquitination is dependent on Thr-286 phosphorylation. Ubiquitinated also by UHRF2 apparently in a phosphorylation-independent manner. Ubiquitination leads to its degradation and G1 arrest. Deubiquitinated by USP2; leading to its stabilization.

The protein localises to the nucleus. The protein resides in the cytoplasm. It is found in the nucleus membrane. Its function is as follows. Regulatory component of the cyclin D1-CDK4 (DC) complex that phosphorylates and inhibits members of the retinoblastoma (RB) protein family including RB1 and regulates the cell-cycle during G(1)/S transition. Phosphorylation of RB1 allows dissociation of the transcription factor E2F from the RB/E2F complex and the subsequent transcription of E2F target genes which are responsible for the progression through the G(1) phase. Hypophosphorylates RB1 in early G(1) phase. Cyclin D-CDK4 complexes are major integrators of various mitogenenic and antimitogenic signals. Also a substrate for SMAD3, phosphorylating SMAD3 in a cell-cycle-dependent manner and repressing its transcriptional activity. Component of the ternary complex, cyclin D1/CDK4/CDKN1B, required for nuclear translocation and activity of the cyclin D-CDK4 complex. Exhibits transcriptional corepressor activity with INSM1 on the NEUROD1 and INS promoters in a cell cycle-independent manner. This is G1/S-specific cyclin-D1 (CCND1) from Pongo abelii (Sumatran orangutan).